Reading from the N-terminus, the 192-residue chain is Peptide deformylase 1 (192 aa).

Residues C101 and H143 each contribute to the Fe cation site. E144 is a catalytic residue. Residue H147 participates in Fe cation binding.

Belongs to the polypeptide deformylase family. Fe(2+) serves as cofactor.

It carries out the reaction N-terminal N-formyl-L-methionyl-[peptide] + H2O = N-terminal L-methionyl-[peptide] + formate. In terms of biological role, removes the formyl group from the N-terminal Met of newly synthesized proteins. Requires at least a dipeptide for an efficient rate of reaction. N-terminal L-methionine is a prerequisite for activity but the enzyme has broad specificity at other positions. The protein is Peptide deformylase 1 of Prochlorococcus marinus (strain MIT 9313).